The primary structure comprises 169 residues: Interleukin-2 (169 aa).

Positions 1–20 (MYSMQLASCVTLTLVLLVNS) are cleaved as a signal peptide. Thr23 is a glycosylation site (O-linked (GalNAc...) threonine). Cys92 and Cys140 form a disulfide bridge.

The protein belongs to the IL-2 family. Produced by immune cells including dendritic cells. In contrast, macrophages do not produce IL2 upon bacterial stimulation.

The protein resides in the secreted. In terms of biological role, cytokine produced by activated CD4-positive helper T-cells and to a lesser extend activated CD8-positive T-cells and natural killer (NK) cells that plays pivotal roles in the immune response and tolerance. Binds to a receptor complex composed of either the high-affinity trimeric IL-2R (IL2RA/CD25, IL2RB/CD122 and IL2RG/CD132) or the low-affinity dimeric IL-2R (IL2RB and IL2RG). Interaction with the receptor leads to oligomerization and conformation changes in the IL-2R subunits resulting in downstream signaling starting with phosphorylation of JAK1 and JAK3. In turn, JAK1 and JAK3 phosphorylate the receptor to form a docking site leading to the phosphorylation of several substrates including STAT5. This process leads to activation of several pathways including STAT, phosphoinositide-3-kinase/PI3K and mitogen-activated protein kinase/MAPK pathways. Functions as a T-cell growth factor and can increase NK-cell cytolytic activity as well. Promotes strong proliferation of activated B-cells and subsequently immunoglobulin production. Plays a pivotal role in regulating the adaptive immune system by controlling the survival and proliferation of regulatory T-cells, which are required for the maintenance of immune tolerance. Moreover, participates in the differentiation and homeostasis of effector T-cell subsets, including Th1, Th2, Th17 as well as memory CD8-positive T-cells. In Mus musculus (Mouse), this protein is Interleukin-2 (Il2).